A 566-amino-acid polypeptide reads, in one-letter code: Probable cytochrome P450 519D1 (566 aa).

Residues 1–21 (MNVFVLTFFICIIYLLFDLIK) traverse the membrane as a helical segment. Residues 471 to 491 (FNNNNNNNNNNNNNNSNNKHK) form a disordered region. The span at 472 to 487 (NNNNNNNNNNNNNNSN) shows a compositional bias: low complexity. Cys510 contacts heme.

The protein belongs to the cytochrome P450 family. Heme serves as cofactor.

It localises to the membrane. This chain is Probable cytochrome P450 519D1 (cyp519D1), found in Dictyostelium discoideum (Social amoeba).